The following is a 479-amino-acid chain: ATP synthase subunit beta (479 aa).

Residue 158–165 participates in ATP binding; the sequence is GGAGLGKT.

It belongs to the ATPase alpha/beta chains family. F-type ATPases have 2 components, CF(1) - the catalytic core - and CF(0) - the membrane proton channel. CF(1) has five subunits: alpha(3), beta(3), gamma(1), delta(1), epsilon(1). CF(0) has three main subunits: a(1), b(2) and c(9-12). The alpha and beta chains form an alternating ring which encloses part of the gamma chain. CF(1) is attached to CF(0) by a central stalk formed by the gamma and epsilon chains, while a peripheral stalk is formed by the delta and b chains.

It is found in the cell inner membrane. It carries out the reaction ATP + H2O + 4 H(+)(in) = ADP + phosphate + 5 H(+)(out). In terms of biological role, produces ATP from ADP in the presence of a proton gradient across the membrane. The catalytic sites are hosted primarily by the beta subunits. This chain is ATP synthase subunit beta, found in Rhodopirellula baltica (strain DSM 10527 / NCIMB 13988 / SH1).